A 509-amino-acid polypeptide reads, in one-letter code: Maturase K (509 aa).

It belongs to the intron maturase 2 family. MatK subfamily.

The protein resides in the plastid. The protein localises to the chloroplast. In terms of biological role, usually encoded in the trnK tRNA gene intron. Probably assists in splicing its own and other chloroplast group II introns. This chain is Maturase K, found in Nicotiana glutinosa (Tobacco).